Here is a 503-residue protein sequence, read N- to C-terminus: MFYAHAFGGYDENLHAFPRISSTVANDVRKYSVVSVYNKKYNIVKNKYMWCNSQVNKRYIGALLPMFECNEYLQIGDPIHDLEGNQISIVTYRHKNYYALSGIGYESLDLCLEGVGIHHHVLETGNAVYGKVQHEYSTIKEKAKEMNALKPGPIIDYHVWIGDCVCQVTTVDVHGKEIMRMRFKRGAVLPIPNLVKVKVGEENDTINLSTSISALLNSGGGTIEVTSKEERVDYVLMKRLESIHHLWSVVYDHLNVVNGEERCYIHMHSSHQSPMLSTVKTNLYMKTMGACLQMDSMEALEYLSELKESGGRSPRPELQKFEYPDGVKDTESIERLAEEFFNRSELQAGESVKFGNSINVKHTSVSAKQLRTRIRQQLPSILSSFANTKGGYLFIGVDNNTHKVIGFTVGHDYLKLVERDIEKYIQKLPVVHFCKKKEDIKYACRFIKVYKPGDETTSTYVCAIKVERCCCAVFADWPESWYMDTSGSMKKYSPDEWVSHIKF.

The segment at 1 to 236 is poxin-like; sequence MFYAHAFGGY…SKEERVDYVL (236 aa). His15 serves as the catalytic Proton donor. The active-site Shared with catalytic histidine of dimeric partner is Tyr136. The active-site Proton acceptor; shared with catalytic histidine of dimeric partner is Lys140. Residues 237–503 form a schlafen-like region; sequence MKRLESIHHL…PDEWVSHIKF (267 aa).

It in the N-terminal section; belongs to the poxin family. The protein in the C-terminal section; belongs to the Schlafen protein family. Subgroup poxviridae B3 subfamily. As to quaternary structure, homodimer.

The enzyme catalyses 2',3'-cGAMP + H2O = Gp(2'-5')Ap(3') + H(+). Its function is as follows. Nuclease that is responsible for viral evasion of host cGAS-STING innate immunity. Cleaves 2',3'-cGAMP which is produced by host cGAS following recognition of intracellular foreign DNA and blocks the subsequent 2',3'-cGAMP-mediated activation of TMEM173/STING which normally spreads to adjacent cells and activates the interferon and NF-kappa-B immune responses. The protein is Poxin-Schlafen (OPG188) of Cynomys gunnisoni (Gunnison's prairie dog).